The chain runs to 121 residues: Replication protein A 14 kDa subunit (121 aa).

Valine 2 carries the N-acetylvaline modification. Glycyl lysine isopeptide (Lys-Gly) (interchain with G-Cter in ubiquitin) cross-links involve residues lysine 23, lysine 39, and lysine 88.

Belongs to the replication factor A protein 3 family. In terms of assembly, component of the canonical replication protein A complex (RPA), a heterotrimer composed of RPA1, RPA2 and RPA3. Also a component of the aRPA, the alternative replication protein A complex, a trimeric complex similar to the replication protein A complex/RPA but where RPA1 and RPA3 are associated with RPA4 instead of RPA2. Interacts with BRIP1/FANCJ via the RPA1 subunit; following DNA damage they colocalize in foci in the nucleus. Ubiquitinated by RFWD3 at stalled replication forks in response to DNA damage: ubiquitination by RFWD3 does not lead to degradation by the proteasome and promotes removal of the RPA complex from stalled replication forks, promoting homologous recombination.

Its subcellular location is the nucleus. In terms of biological role, as part of the heterotrimeric replication protein A complex (RPA/RP-A), binds and stabilizes single-stranded DNA intermediates that form during DNA replication or upon DNA stress. It prevents their reannealing and in parallel, recruits and activates different proteins and complexes involved in DNA metabolism. Thereby, it plays an essential role both in DNA replication and the cellular response to DNA damage. In the cellular response to DNA damage, the RPA complex controls DNA repair and DNA damage checkpoint activation. Through recruitment of ATRIP activates the ATR kinase a master regulator of the DNA damage response. It is required for the recruitment of the DNA double-strand break repair factors RAD51 and RAD52 to chromatin, in response to DNA damage. Also recruits to sites of DNA damage proteins like XPA and XPG that are involved in nucleotide excision repair and is required for this mechanism of DNA repair. Also plays a role in base excision repair (BER), probably through interaction with UNG. RPA stimulates 5'-3' helicase activity of BRIP1/FANCJ. Also recruits SMARCAL1/HARP, which is involved in replication fork restart, to sites of DNA damage. May also play a role in telomere maintenance. RPA3 has its own single-stranded DNA-binding activity and may be responsible for polarity of the binding of the complex to DNA. As part of the alternative replication protein A complex, aRPA, binds single-stranded DNA and probably plays a role in DNA repair. Compared to the RPA2-containing, canonical RPA complex, may not support chromosomal DNA replication and cell cycle progression through S-phase. The aRPA may not promote efficient priming by DNA polymerase alpha but could support DNA synthesis by polymerase delta in presence of PCNA and replication factor C (RFC), the dual incision/excision reaction of nucleotide excision repair and RAD51-dependent strand exchange. The protein is Replication protein A 14 kDa subunit (RPA3) of Homo sapiens (Human).